The primary structure comprises 114 residues: uncharacterized protein (114 aa).

Positions 6–114 (IFKNIIQRKI…LGGKKLKSFS (109 aa)) constitute an HIT domain.

This is an uncharacterized protein from Buchnera aphidicola subsp. Acyrthosiphon pisum (strain APS) (Acyrthosiphon pisum symbiotic bacterium).